The chain runs to 692 residues: UvrABC system protein B (692 aa).

Residues 32 to 187 enclose the Helicase ATP-binding domain; it reads ENIENGEKAQ…LLNDLVGIQF (156 aa). Residue 45-52 participates in ATP binding; that stretch reads GATGTGKT. A Beta-hairpin motif is present at residues 98–121; sequence YYDYYQPEAYVPSSDTYIEKDSSV. The Helicase C-terminal domain maps to 436–631; that stretch reads QIDDLVGEIH…TIKKEIRDLI (196 aa). Residues 656–691 form the UVR domain; the sequence is KALVKKLEKEMQQAAAALDFEGAAQLRDMVLELRAM.

This sequence belongs to the UvrB family. As to quaternary structure, forms a heterotetramer with UvrA during the search for lesions. Interacts with UvrC in an incision complex.

It localises to the cytoplasm. The UvrABC repair system catalyzes the recognition and processing of DNA lesions. A damage recognition complex composed of 2 UvrA and 2 UvrB subunits scans DNA for abnormalities. Upon binding of the UvrA(2)B(2) complex to a putative damaged site, the DNA wraps around one UvrB monomer. DNA wrap is dependent on ATP binding by UvrB and probably causes local melting of the DNA helix, facilitating insertion of UvrB beta-hairpin between the DNA strands. Then UvrB probes one DNA strand for the presence of a lesion. If a lesion is found the UvrA subunits dissociate and the UvrB-DNA preincision complex is formed. This complex is subsequently bound by UvrC and the second UvrB is released. If no lesion is found, the DNA wraps around the other UvrB subunit that will check the other stand for damage. The chain is UvrABC system protein B from Lactococcus lactis subsp. cremoris (strain MG1363).